Reading from the N-terminus, the 281-residue chain is Mad-like protein 1 (281 aa).

Residues 71-80 (SCASNASTSS) show a composition bias toward low complexity. The tract at residues 71–105 (SCASNASTSSQPYCSSPPARKSSKHSRTAHNELEK) is disordered. The interval 95–108 (HSRTAHNELEKTRR) is basic motif. Residues 95-147 (HSRTAHNELEKTRRANLRGCLETLKMLVPCVSDATRNTTLALLTRARDHIIEL) enclose the bHLH domain. Positions 109–147 (ANLRGCLETLKMLVPCVSDATRNTTLALLTRARDHIIEL) are helix-loop-helix motif. The stretch at 144 to 185 (IIELQDSNAAQMKKLNDLRDEQDELVAELAQLQADEEVAQAT) forms a coiled coil. Positions 189 to 213 (CQTLSQSRPESRASSFTSTSSRDSP) are disordered. A compositionally biased stretch (low complexity) spans 200-212 (RASSFTSTSSRDS).

In terms of assembly, forms heterodimer with mxl-1 in the presence and absence of DNA. In terms of processing, ubiquitinated. Expressed in intestinal cells in adults. Expressed in D-type motor neuron cell bodies.

Its subcellular location is the nucleus. Transcriptional regulator which binds to the E box motif 5'-CACGTG-3', when in a heterodimeric complex with mxl-1. Involved in the control of lifespan in response to dietary restriction, the decline in protein homeostasis associated with normal aging, germline signaling and may overlap with the insulin-like signaling pathway. Plays a role in autophagy. Involved in promoting infection by the microsporidian pathogen N.parisii, possibly together with transcription factors pha-4 and zip-10. In response to neuronal injury, mdl-1 is targeted by sdz-33 for ubiquitin-mediated degradation, probably thereby reducing levels of mdl-1-mxl-1 heterodimers, allowing free mxl-1 to form complexes with tdpt-1 and thus inhibiting tdpt-1-dependent sumoylation of ets-4. The polypeptide is Mad-like protein 1 (Caenorhabditis elegans).